Here is a 369-residue protein sequence, read N- to C-terminus: Anhydro-N-acetylmuramic acid kinase (369 aa).

12 to 19 (GTSLDGVD) contributes to the ATP binding site.

The protein belongs to the anhydro-N-acetylmuramic acid kinase family.

The enzyme catalyses 1,6-anhydro-N-acetyl-beta-muramate + ATP + H2O = N-acetyl-D-muramate 6-phosphate + ADP + H(+). Its pathway is amino-sugar metabolism; 1,6-anhydro-N-acetylmuramate degradation. It functions in the pathway cell wall biogenesis; peptidoglycan recycling. Catalyzes the specific phosphorylation of 1,6-anhydro-N-acetylmuramic acid (anhMurNAc) with the simultaneous cleavage of the 1,6-anhydro ring, generating MurNAc-6-P. Is required for the utilization of anhMurNAc either imported from the medium or derived from its own cell wall murein, and thus plays a role in cell wall recycling. In Escherichia coli O157:H7, this protein is Anhydro-N-acetylmuramic acid kinase.